Consider the following 356-residue polypeptide: Fructose-bisphosphate aldolase 1, chloroplastic (356 aa).

The transit peptide at 1 to 6 (GLTIRA) directs the protein to the chloroplast. Residues Arg53 and Lys143 each contribute to the substrate site. Residue Glu183 is the Proton acceptor of the active site. Catalysis depends on Lys225, which acts as the Schiff-base intermediate with dihydroxyacetone-P.

It belongs to the class I fructose-bisphosphate aldolase family.

It is found in the plastid. The protein resides in the chloroplast. It carries out the reaction beta-D-fructose 1,6-bisphosphate = D-glyceraldehyde 3-phosphate + dihydroxyacetone phosphate. The protein operates within carbohydrate degradation; glycolysis; D-glyceraldehyde 3-phosphate and glycerone phosphate from D-glucose: step 4/4. In Pisum sativum (Garden pea), this protein is Fructose-bisphosphate aldolase 1, chloroplastic.